Reading from the N-terminus, the 379-residue chain is MNTPRIIVAMSGGVDSSVAAWRLNSQRETIAGLFMRNWTDDGNGQCHAEEDRRDAVAVCGILGIAFHFRDFSHEYWQEVFTHFLAEYANGRTPNPDVLCNREIKFKHFLETARELGADSIATGHYARIKHYRQRWHLLRGADRSKDQSYFLHQLGQEQLAATMFPIGDLEKPQLRQLAHQAGLPTHAKKDSTGICFIGERNFREFLKQYLPAQPGEIRDPQEQRIAEHPGVFYFTLGQRQGLNIGGVRNRPPSPWYVIGKDLATNVLYVDQHRDSPFLQSRWLRSEPAHWVSGSPPAPTFTCTAQTRYRQADEPCKVTVRNDGSLDVDFTQTQWAVTPGQSLVLYDGNECLGGAVIATTDAPLERKRARNLSKTENVLQ.

Residues 9-16 (AMSGGVDS) and Met-35 contribute to the ATP site. Residues 94–96 (NPD) form an interaction with target base in tRNA region. Cys-99 serves as the catalytic Nucleophile. Residues Cys-99 and Cys-195 are joined by a disulfide bond. Gly-123 contributes to the ATP binding site. The tract at residues 145-147 (KDQ) is interaction with tRNA. Cys-195 (cysteine persulfide intermediate) is an active-site residue. Residues 307 to 308 (RY) are interaction with tRNA.

It belongs to the MnmA/TRMU family.

The protein resides in the cytoplasm. It catalyses the reaction S-sulfanyl-L-cysteinyl-[protein] + uridine(34) in tRNA + AH2 + ATP = 2-thiouridine(34) in tRNA + L-cysteinyl-[protein] + A + AMP + diphosphate + H(+). Its function is as follows. Catalyzes the 2-thiolation of uridine at the wobble position (U34) of tRNA, leading to the formation of s(2)U34. The polypeptide is tRNA-specific 2-thiouridylase MnmA (Xylella fastidiosa (strain 9a5c)).